The following is a 239-amino-acid chain: Tetrahydromethanopterin S-methyltransferase subunit A (239 aa).

At M1–S215 the chain is on the cytoplasmic side. Position 85 (H85) interacts with 5-hydroxybenzimidazolylcob(I)amide. The chain crosses the membrane as a helical span at residues G216–L238. Position 239 (L239) is a topological domain, extracellular.

The protein belongs to the MtrA family. In terms of assembly, the complex is composed of 8 subunits; MtrA, MtrB, MtrC, MtrD, MtrE, MtrF, MtrG and MtrH. It depends on 5-hydroxybenzimidazolylcob(I)amide as a cofactor.

It localises to the cell membrane. It catalyses the reaction 5-methyl-5,6,7,8-tetrahydromethanopterin + coenzyme M + 2 Na(+)(in) = 5,6,7,8-tetrahydromethanopterin + methyl-coenzyme M + 2 Na(+)(out). It functions in the pathway one-carbon metabolism; methanogenesis from CO(2); methyl-coenzyme M from 5,10-methylene-5,6,7,8-tetrahydromethanopterin: step 2/2. In terms of biological role, part of a complex that catalyzes the formation of methyl-coenzyme M and tetrahydromethanopterin from coenzyme M and methyl-tetrahydromethanopterin. This is an energy-conserving, sodium-ion translocating step. The sequence is that of Tetrahydromethanopterin S-methyltransferase subunit A from Methanococcus maripaludis (strain DSM 14266 / JCM 13030 / NBRC 101832 / S2 / LL).